Here is a 375-residue protein sequence, read N- to C-terminus: Probable aspartate aminotransferase (375 aa).

L-aspartate contacts are provided by G31 and N165. K223 bears the N6-(pyridoxal phosphate)lysine mark. R353 is a binding site for L-aspartate.

This sequence belongs to the class-I pyridoxal-phosphate-dependent aminotransferase family. In terms of assembly, homodimer. Pyridoxal 5'-phosphate is required as a cofactor.

The protein localises to the cytoplasm. It catalyses the reaction L-aspartate + 2-oxoglutarate = oxaloacetate + L-glutamate. The sequence is that of Probable aspartate aminotransferase from Methanocaldococcus jannaschii (strain ATCC 43067 / DSM 2661 / JAL-1 / JCM 10045 / NBRC 100440) (Methanococcus jannaschii).